A 389-amino-acid polypeptide reads, in one-letter code: Geranylgeranyl pyrophosphate synthase A (389 aa).

Isopentenyl diphosphate is bound by residues lysine 99, arginine 102, and histidine 131. Mg(2+)-binding residues include aspartate 138 and aspartate 142. Dimethylallyl diphosphate is bound at residue arginine 147. Residue arginine 148 participates in isopentenyl diphosphate binding.

The protein belongs to the FPP/GGPP synthase family. Requires Mg(2+) as cofactor.

The protein resides in the cytoplasm. The catalysed reaction is isopentenyl diphosphate + (2E)-geranyl diphosphate = (2E,6E)-farnesyl diphosphate + diphosphate. The enzyme catalyses isopentenyl diphosphate + (2E,6E)-farnesyl diphosphate = (2E,6E,10E)-geranylgeranyl diphosphate + diphosphate. Its pathway is isoprenoid biosynthesis; farnesyl diphosphate biosynthesis; farnesyl diphosphate from geranyl diphosphate and isopentenyl diphosphate: step 1/1. It participates in isoprenoid biosynthesis; geranylgeranyl diphosphate biosynthesis; geranylgeranyl diphosphate from farnesyl diphosphate and isopentenyl diphosphate: step 1/1. Its function is as follows. Catalyzes the trans-addition of the 2 molecules of isopentenyl diphosphate (IPP) onto geranyl diphosphate (GDP) to form geranylgeranyl pyrophosphate (GGDP). Does not catalyze the conversion of dimethylallyl diphosphate (DMAPP). In Phomopsis amygdali (Fusicoccum amygdali), this protein is Geranylgeranyl pyrophosphate synthase A (GGS-A).